Here is a 446-residue protein sequence, read N- to C-terminus: MGTDQGKTFTWEELAAHNTKGDLFLAIRGRVYDVTKFLSRHPGGVDTLLLGAGRDVTPVFEMYHAFGAADAIMKKYYVGTLVSNELPVFPEPTVFHKTIKTRVEGYFTDRDIDPKNRPEIWGRYALIFGSLIASYYAQLFVPFVVERTWLQVVFAIIMGFACAQVGLNPLHDASHFSVTHNPTVWKILGATHDFFNGASYLVWMYQHMLGHHPYTNIAGADPDVSTFEPDVRRIKPNQKWFVNHINQDMFVPFLYGLLAFKVRIQDINILYFVKTNDAIRVNPISTWHTVMFWGGKAFFVWYRLIVPLQYLPLGKVLLLFTVADMVSSYWLALTFQANHVVEEVQWPLPDENGIIQKDWAAMQVETTQDYAHDSHLWTSITGSLNYQAVHHLFPNVSQHHYPDILAIIKNTCSEYKVPYLVKDTFWQAFASHLEHLRVLGLRPKEE.

A Cytochrome b5 heme-binding domain is found at 6 to 82 (GKTFTWEELA…MKKYYVGTLV (77 aa)). Heme is bound by residues His41 and His64. 2 consecutive transmembrane segments (helical) span residues 125-145 (ALIF…PFVV) and 150-170 (LQVV…LNPL). Positions 171 to 175 (HDASH) match the Histidine box-1 motif. The Histidine box-2 motif lies at 207 to 212 (HMLGHH). Residues 387-391 (QAVHH) carry the Histidine box-3 motif.

Belongs to the fatty acid desaturase type 1 family. Requires Fe(2+) as cofactor.

It localises to the membrane. The enzyme catalyses an (8Z,11Z,14Z)-icosatrienoyl-containing glycerolipid + 2 Fe(II)-[cytochrome b5] + O2 + 2 H(+) = (5Z,8Z,11Z,14Z)-eicosatetraenoyl-containing glycerolipid + 2 Fe(III)-[cytochrome b5] + 2 H2O. It carries out the reaction an (8Z,11Z,14Z,17Z)-eicosatetraenoyl-containing glycerolipid + 2 Fe(II)-[cytochrome b5] + O2 + 2 H(+) = a (5Z,8Z,11Z,14Z,17Z)-eicosapentaenoyl-containing glycerolipid + 2 Fe(III)-[cytochrome b5] + 2 H2O. Fatty acid desaturase that introduces a cis double bond at the 5-position in 20-carbon polyunsaturated fatty acids incorporated in a glycerolipid that contain a Delta(8) double bond. Involved in the conversion of di-homo-Delta-linolenic acid to arachidonic acid. Essential in the production of eicosanoids. The polypeptide is Acyl-lipid (8-3)-desaturase (DES1) (Mortierella alpina (Oleaginous fungus)).